A 201-amino-acid polypeptide reads, in one-letter code: Small ribosomal subunit protein uS4c (201 aa).

The interval 23-42 (SKKPRAGSNLRNQLRPGKKS) is disordered. The S4 RNA-binding domain maps to 89 to 151 (MRLDNILFRL…QKSKSLVQNY (63 aa)).

The protein belongs to the universal ribosomal protein uS4 family. Part of the 30S ribosomal subunit. Contacts protein S5. The interaction surface between S4 and S5 is involved in control of translational fidelity.

It localises to the plastid. The protein resides in the chloroplast. Functionally, one of the primary rRNA binding proteins, it binds directly to 16S rRNA where it nucleates assembly of the body of the 30S subunit. Its function is as follows. With S5 and S12 plays an important role in translational accuracy. The chain is Small ribosomal subunit protein uS4c (rps4) from Morus indica (Mulberry).